A 20-amino-acid chain; its full sequence is ADVPGNYPLNSYGASYYCTI.

As to quaternary structure, toxin b is a heterodimer composed of toxin alpha and toxin beta. As to expression, expressed by the venom gland.

It localises to the secreted. In terms of biological role, binds to sodium channels (Nav) and affects the channel activation process. The sequence is that of Toxin b subunit beta from Androctonus crassicauda (Arabian fat-tailed scorpion).